The chain runs to 665 residues: Adenylate cyclase 1 (665 aa).

Positions 1-25 (MLQRSESGFKDIESMQDSNADKPSR) are disordered. The segment covering 7-24 (SGFKDIESMQDSNADKPS) has biased composition (basic and acidic residues). 2 helical membrane passes run 33-53 (SLLGLVMVAMLIVVSATLVGL) and 373-393 (AVSGAVVVVAVLLALVLAHLI). An HAMP domain is found at 394 to 444 (TKSLNQLTDSANRLQDLDFATPIDVSSHVAEISTLNGAMNRARDAIFTFAL). The region spanning 471–603 (TAMFTDIYDF…DTVNVASRLE (133 aa)) is the Guanylate cyclase domain. Mg(2+) contacts are provided by Asp-476 and Asp-520.

Belongs to the adenylyl cyclase class-3 family. Mg(2+) serves as cofactor.

It localises to the cell membrane. It catalyses the reaction ATP = 3',5'-cyclic AMP + diphosphate. Functionally, plays essential roles in regulation of cellular metabolism by catalyzing the synthesis of a second messenger, cAMP. This chain is Adenylate cyclase 1 (cya1), found in Rhizobium meliloti (strain 1021) (Ensifer meliloti).